The chain runs to 129 residues: Lysozyme C-2 (129 aa).

The C-type lysozyme domain maps to 1 to 129 (KVFERCELAR…VSSYVEGCTL (129 aa)). 4 disulfides stabilise this stretch: Cys6/Cys127, Cys30/Cys115, Cys65/Cys81, and Cys77/Cys95. Active-site residues include Glu35 and Asp53.

Belongs to the glycosyl hydrolase 22 family. In terms of assembly, monomer.

It carries out the reaction Hydrolysis of (1-&gt;4)-beta-linkages between N-acetylmuramic acid and N-acetyl-D-glucosamine residues in a peptidoglycan and between N-acetyl-D-glucosamine residues in chitodextrins.. Lysozymes have primarily a bacteriolytic function; those in tissues and body fluids are associated with the monocyte-macrophage system and enhance the activity of immunoagents. In Capra hircus (Goat), this protein is Lysozyme C-2.